Here is a 491-residue protein sequence, read N- to C-terminus: Ribonuclease G (491 aa).

The S1 motif domain occupies 40 to 129 (GNIYKGRVTR…LTTDITLPSR (90 aa)). D305 and D348 together coordinate Mg(2+).

It belongs to the RNase E/G family. RNase G subfamily. In terms of assembly, homodimer, in equilibrium with possible higher multimers. It depends on Mg(2+) as a cofactor.

Its subcellular location is the cytoplasm. Functionally, an endonuclease that acts in the processing of the 5'-end of 16S rRNA and 23S rRNA. It prefers 5'-monophosphorylated substrates and cleaves single-stranded sites rich in A and U residues; contributes to tRNA processing and mRNA turnover. The chain is Ribonuclease G (rng) from Haemophilus influenzae (strain ATCC 51907 / DSM 11121 / KW20 / Rd).